The sequence spans 362 residues: Porin Omp2b (362 aa).

Positions 1 to 22 (MNIKSLLLGSAAALVAASGAQA) are cleaved as a signal peptide.

The protein belongs to the alphaproteobacteria porin family. As to quaternary structure, homotrimer.

Its subcellular location is the cell outer membrane. Its function is as follows. Forms passive diffusion pores that allow small molecular weight hydrophilic materials across the outer membrane. This chain is Porin Omp2b (omp2b), found in Brucella suis biovar 1 (strain 1330).